A 337-amino-acid polypeptide reads, in one-letter code: DNA-directed RNA polymerase subunit alpha (337 aa).

Positions methionine 1–glutamate 233 are alpha N-terminal domain (alpha-NTD). Positions lysine 265–phenylalanine 337 are alpha C-terminal domain (alpha-CTD).

The protein belongs to the RNA polymerase alpha chain family. As to quaternary structure, in plastids the minimal PEP RNA polymerase catalytic core is composed of four subunits: alpha, beta, beta', and beta''. When a (nuclear-encoded) sigma factor is associated with the core the holoenzyme is formed, which can initiate transcription.

The protein resides in the plastid. Its subcellular location is the chloroplast. It carries out the reaction RNA(n) + a ribonucleoside 5'-triphosphate = RNA(n+1) + diphosphate. Functionally, DNA-dependent RNA polymerase catalyzes the transcription of DNA into RNA using the four ribonucleoside triphosphates as substrates. The protein is DNA-directed RNA polymerase subunit alpha of Nicotiana tomentosiformis (Tobacco).